A 72-amino-acid chain; its full sequence is Translation initiation factor IF-1 (72 aa).

Residues 1–72 (MAKEGAIEVE…TRGRIVYRYK (72 aa)) enclose the S1-like domain.

It belongs to the IF-1 family. In terms of assembly, component of the 30S ribosomal translation pre-initiation complex which assembles on the 30S ribosome in the order IF-2 and IF-3, IF-1 and N-formylmethionyl-tRNA(fMet); mRNA recruitment can occur at any time during PIC assembly.

It is found in the cytoplasm. In terms of biological role, one of the essential components for the initiation of protein synthesis. Stabilizes the binding of IF-2 and IF-3 on the 30S subunit to which N-formylmethionyl-tRNA(fMet) subsequently binds. Helps modulate mRNA selection, yielding the 30S pre-initiation complex (PIC). Upon addition of the 50S ribosomal subunit IF-1, IF-2 and IF-3 are released leaving the mature 70S translation initiation complex. This is Translation initiation factor IF-1 from Corynebacterium diphtheriae (strain ATCC 700971 / NCTC 13129 / Biotype gravis).